The primary structure comprises 209 residues: ATP-dependent Clp protease proteolytic subunit (209 aa).

Ser-107 functions as the Nucleophile in the catalytic mechanism. His-132 is an active-site residue.

The protein belongs to the peptidase S14 family. Fourteen ClpP subunits assemble into 2 heptameric rings which stack back to back to give a disk-like structure with a central cavity, resembling the structure of eukaryotic proteasomes.

The protein localises to the cytoplasm. It carries out the reaction Hydrolysis of proteins to small peptides in the presence of ATP and magnesium. alpha-casein is the usual test substrate. In the absence of ATP, only oligopeptides shorter than five residues are hydrolyzed (such as succinyl-Leu-Tyr-|-NHMec, and Leu-Tyr-Leu-|-Tyr-Trp, in which cleavage of the -Tyr-|-Leu- and -Tyr-|-Trp bonds also occurs).. Its function is as follows. Cleaves peptides in various proteins in a process that requires ATP hydrolysis. Has a chymotrypsin-like activity. Plays a major role in the degradation of misfolded proteins. The polypeptide is ATP-dependent Clp protease proteolytic subunit (Methylobacterium nodulans (strain LMG 21967 / CNCM I-2342 / ORS 2060)).